Consider the following 281-residue polypeptide: uncharacterized protein (281 aa).

The protein localises to the plastid. It is found in the chloroplast. This is an uncharacterized protein from Euglena gracilis.